A 277-amino-acid chain; its full sequence is Phosphoenolpyruvate synthase regulatory protein (277 aa).

157–164 (GVSRCGKT) serves as a coordination point for ADP.

The protein belongs to the pyruvate, phosphate/water dikinase regulatory protein family. PSRP subfamily.

It carries out the reaction [pyruvate, water dikinase] + ADP = [pyruvate, water dikinase]-phosphate + AMP + H(+). It catalyses the reaction [pyruvate, water dikinase]-phosphate + phosphate + H(+) = [pyruvate, water dikinase] + diphosphate. Its function is as follows. Bifunctional serine/threonine kinase and phosphorylase involved in the regulation of the phosphoenolpyruvate synthase (PEPS) by catalyzing its phosphorylation/dephosphorylation. This is Phosphoenolpyruvate synthase regulatory protein from Escherichia coli O7:K1 (strain IAI39 / ExPEC).